Reading from the N-terminus, the 347-residue chain is Phosphoribosylformylglycinamidine cyclo-ligase (347 aa).

Belongs to the AIR synthase family.

It localises to the cytoplasm. The catalysed reaction is 2-formamido-N(1)-(5-O-phospho-beta-D-ribosyl)acetamidine + ATP = 5-amino-1-(5-phospho-beta-D-ribosyl)imidazole + ADP + phosphate + H(+). It functions in the pathway purine metabolism; IMP biosynthesis via de novo pathway; 5-amino-1-(5-phospho-D-ribosyl)imidazole from N(2)-formyl-N(1)-(5-phospho-D-ribosyl)glycinamide: step 2/2. This is Phosphoribosylformylglycinamidine cyclo-ligase from Syntrophus aciditrophicus (strain SB).